Reading from the N-terminus, the 504-residue chain is Probable GTP-binding protein OBGC2 (504 aa).

Basic and acidic residues predominate over residues A24–A39. 2 disordered regions span residues A24 to N46 and V93 to K122. The Obg domain maps to H73–V276. Positions S107 to K122 are enriched in basic residues. The region spanning A277 to R494 is the OBG-type G domain. Residues G283 to S290 and D337 to L341 contribute to the GTP site. Residues S436–E452 are compositionally biased toward polar residues. The interval S436–R463 is disordered. Basic and acidic residues predominate over residues T453 to R463.

The protein belongs to the TRAFAC class OBG-HflX-like GTPase superfamily. OBG GTPase family.

Functionally, may bind GTP and have GTPase activity. The protein is Probable GTP-binding protein OBGC2 of Oryza sativa subsp. japonica (Rice).